The primary structure comprises 78 residues: Beta-defensin 105A (78 aa).

The signal sequence occupies residues M1–A27. 3 disulfides stabilise this stretch: C43–C74, C53–C67, and C57–C73.

This sequence belongs to the beta-defensin family.

Its subcellular location is the secreted. Functionally, has antimicrobial activity. This chain is Beta-defensin 105A (DEFB105A), found in Pongo pygmaeus (Bornean orangutan).